The primary structure comprises 153 residues: 3-hydroxyacyl-[acyl-carrier-protein] dehydratase FabZ (153 aa).

Histidine 57 is an active-site residue.

The protein belongs to the thioester dehydratase family. FabZ subfamily.

The protein localises to the cytoplasm. It carries out the reaction a (3R)-hydroxyacyl-[ACP] = a (2E)-enoyl-[ACP] + H2O. Involved in unsaturated fatty acids biosynthesis. Catalyzes the dehydration of short chain beta-hydroxyacyl-ACPs and long chain saturated and unsaturated beta-hydroxyacyl-ACPs. This Aeromonas hydrophila subsp. hydrophila (strain ATCC 7966 / DSM 30187 / BCRC 13018 / CCUG 14551 / JCM 1027 / KCTC 2358 / NCIMB 9240 / NCTC 8049) protein is 3-hydroxyacyl-[acyl-carrier-protein] dehydratase FabZ.